A 524-amino-acid chain; its full sequence is B3 domain-containing protein Os07g0183700 (524 aa).

Disordered regions lie at residues Asp94–Ser152 and Pro191–Gln232. The segment covering Cys100–Ala109 has biased composition (pro residues). 2 stretches are compositionally biased toward low complexity: residues Gly110–Ala124 and Ala200–Gln232. A DNA-binding region (TF-B3) is located at residues Ser336–Arg434.

Its subcellular location is the nucleus. The polypeptide is B3 domain-containing protein Os07g0183700 (Oryza sativa subsp. japonica (Rice)).